Reading from the N-terminus, the 132-residue chain is Transcriptional repressor SmtB homolog (132 aa).

Zn(2+)-binding residues include Cys20, His26, Cys71, Cys73, Asp114, His116, His127, and Glu130. In terms of domain architecture, HTH arsR-type spans 38-132; that stretch reads MSLDQAQQMA…EVADHLQESD (95 aa). Positions 72–91 form a DNA-binding region, H-T-H motif; the sequence is VCDLAAAMKVSESAVSHQLR.

As to quaternary structure, homodimer.

Its function is as follows. Transcriptional repressor of the expression of the ziaA gene. Controls zinc homeostasis by triggering ZiaA-mediated efflux of excess zinc into the periplasm. This is Transcriptional repressor SmtB homolog (ziaR) from Synechocystis sp. (strain ATCC 27184 / PCC 6803 / Kazusa).